Consider the following 457-residue polypeptide: Glutamate--tRNA ligase 1 (457 aa).

Positions 9–19 (PSPTGYIHIGN) match the 'HIGH' region motif. The short motif at 250–254 (GLSKR) is the 'KMSKS' region element. ATP is bound at residue Lys-253.

Belongs to the class-I aminoacyl-tRNA synthetase family. Glutamate--tRNA ligase type 1 subfamily. In terms of assembly, monomer.

It is found in the cytoplasm. The enzyme catalyses tRNA(Glu) + L-glutamate + ATP = L-glutamyl-tRNA(Glu) + AMP + diphosphate. Its function is as follows. Catalyzes the attachment of glutamate to tRNA(Glu) in a two-step reaction: glutamate is first activated by ATP to form Glu-AMP and then transferred to the acceptor end of tRNA(Glu). The sequence is that of Glutamate--tRNA ligase 1 from Brucella canis (strain ATCC 23365 / NCTC 10854 / RM-666).